A 352-amino-acid chain; its full sequence is tRNA pseudouridine synthase D (352 aa).

Residue aspartate 81 is the Nucleophile of the active site. In terms of domain architecture, TRUD spans 157 to 303 (GIPNYFGVQR…MEHERRILRL (147 aa)).

Belongs to the pseudouridine synthase TruD family.

The enzyme catalyses uridine(13) in tRNA = pseudouridine(13) in tRNA. In terms of biological role, responsible for synthesis of pseudouridine from uracil-13 in transfer RNAs. The polypeptide is tRNA pseudouridine synthase D (Pseudomonas syringae pv. tomato (strain ATCC BAA-871 / DC3000)).